The chain runs to 352 residues: Ion-translocating oxidoreductase complex subunit D (352 aa).

5 consecutive transmembrane segments (helical) span residues 20–40 (IMLL…WFFG), 42–62 (GTLV…ALVL), 68–88 (PIAA…LAVS), 89–109 (IPPL…VIIA), and 123–143 (PAMI…TNWL). T187 carries the post-translational modification FMN phosphoryl threonine. Helical transmembrane passes span 217–237 (GAGW…LLAI), 244–264 (IPVS…LFAP), 267–287 (LASP…FFIL), 301–321 (LIFG…GGYP), and 322–342 (DGVA…DYYT).

The protein belongs to the NqrB/RnfD family. The complex is composed of six subunits: RsxA, RsxB, RsxC, RsxD, RsxE and RsxG. FMN serves as cofactor.

It localises to the cell inner membrane. Part of a membrane-bound complex that couples electron transfer with translocation of ions across the membrane. Required to maintain the reduced state of SoxR. The protein is Ion-translocating oxidoreductase complex subunit D of Escherichia fergusonii (strain ATCC 35469 / DSM 13698 / CCUG 18766 / IAM 14443 / JCM 21226 / LMG 7866 / NBRC 102419 / NCTC 12128 / CDC 0568-73).